A 303-amino-acid chain; its full sequence is Oxygen-dependent coproporphyrinogen-III oxidase (303 aa).

Position 93 (S93) interacts with substrate. A divalent metal cation is bound by residues H97 and H107. Catalysis depends on H107, which acts as the Proton donor. N109–R111 contributes to the substrate binding site. 2 residues coordinate a divalent metal cation: H149 and H179. The important for dimerization stretch occupies residues Y244–R279. G262–R264 contributes to the substrate binding site.

It belongs to the aerobic coproporphyrinogen-III oxidase family. As to quaternary structure, homodimer. A divalent metal cation is required as a cofactor.

It localises to the cytoplasm. It catalyses the reaction coproporphyrinogen III + O2 + 2 H(+) = protoporphyrinogen IX + 2 CO2 + 2 H2O. Its pathway is porphyrin-containing compound metabolism; protoporphyrin-IX biosynthesis; protoporphyrinogen-IX from coproporphyrinogen-III (O2 route): step 1/1. Its function is as follows. Involved in the heme biosynthesis. Catalyzes the aerobic oxidative decarboxylation of propionate groups of rings A and B of coproporphyrinogen-III to yield the vinyl groups in protoporphyrinogen-IX. This Bordetella petrii (strain ATCC BAA-461 / DSM 12804 / CCUG 43448) protein is Oxygen-dependent coproporphyrinogen-III oxidase.